The sequence spans 1185 residues: Adhesion G-protein coupled receptor G6 (1185 aa).

An N-terminal signal peptide occupies residues Met1–Ala32. The Extracellular segment spans residues Gln33 to Arg849. Cys41 and Cys67 form a disulfide bridge. Residues Cys41 to Val149 enclose the CUB domain. The interval Cys41 to Ser354 is mediates interaction with type IV collagen. Residues Cys41 to Ala839 are inhibits receptor signaling in absence of type IV collagen. Asn68 is a glycosylation site (N-linked (GlcNAc...) asparagine). Positions 89 and 97 each coordinate Ca(2+). A disulfide bond links Cys94 and Cys111. N-linked (GlcNAc...) asparagine glycosylation is present at Asn121. Ca(2+) is bound by residues Asp134, Ser136, and Val137. In terms of domain architecture, Pentraxin (PTX) spans Arg154 to Cys355. 3 disulfides stabilise this stretch: Cys185–Cys248, Cys229–Cys271, and Cys369–Cys375. N-linked (GlcNAc...) asparagine glycosylation is found at Asn395, Asn429, Asn470, Asn539, Asn550, Asn562, Asn565, Asn613, Asn680, Asn691, Asn719, Asn763, Asn799, and Asn818. 2 disulfides stabilise this stretch: Cys508–Cys544 and Cys532–Cys563. In terms of domain architecture, GAIN-B spans Pro658–Ala840. Disulfide bonds link Cys790-Cys822 and Cys809-Cys824. A GPS region spans residues Cys790–Ala840. A stachel region spans residues His829 to Ser837. Residues Val850–Leu870 traverse the membrane as a helical segment. The Cytoplasmic portion of the chain corresponds to Leu871–Lys886. A helical transmembrane segment spans residues Ile887–Trp907. At Leu908–Glu915 the chain is on the extracellular side. Residues Leu916 to Gly936 form a helical membrane-spanning segment. Residues Leu937–Tyr957 are Cytoplasmic-facing. A helical membrane pass occupies residues Ile958 to Ala978. Over Val979 to Thr1013 the chain is Extracellular. The helical transmembrane segment at Cys1014–Ile1034 threads the bilayer. Residues Gln1035–Arg1057 are Cytoplasmic-facing. A helical membrane pass occupies residues Ser1058 to Val1080. Over Ser1081 to Ala1083 the chain is Extracellular. Residues Phe1084 to Leu1106 form a helical membrane-spanning segment. Asn1092 provides a ligand contact to 17alpha-hydroxyprogesterone. Residues Lys1107–Gln1185 are Cytoplasmic-facing. The interval Asn1138–Thr1160 is disordered. Over residues Ser1144–Ser1158 the composition is skewed to low complexity.

Belongs to the G-protein coupled receptor 2 family. Adhesion G-protein coupled receptor (ADGR) subfamily. Autoproteolytically processed at the GPS region of the GAIN-B domain; this cleavage modulates receptor activity. As to expression, expressed in Schwann cells of the posterior lateral line nerve and in brain.

Its subcellular location is the cell membrane. With respect to regulation, forms a heterodimer of 2 chains generated by proteolytic processing that remain associated through non-covalent interactions mediated by the GAIN-B domain. In the inactivated receptor, the Stachel sequence (also named stalk) is embedded in the GAIN-B domain, where it adopts a beta-strand conformation. On activation, the Stachel moves into the 7 transmembrane region and adopts a twisted hook-shaped configuration that forms contacts within the receptor, leading to coupling of a G-alpha protein, which activates signaling. The cleaved GAIN-B and N-terminal domains can then dissociate from the rest of the receptor. Its function is as follows. Adhesion G-protein coupled receptor (aGPCR) for steroid hormones, such as progesterone and 17alpha-hydroxyprogesterone (17OHP). Ligand binding causes a conformation change that triggers signaling via guanine nucleotide-binding proteins (G proteins) and modulates the activity of downstream effectors, such as adenylate cyclase. Adgrg6 is coupled to G(i) G alpha proteins and mediates inhibition of adenylate cyclase. Also able to couple to G(q) G proteins. Involved in myelination of the peripheral nervous system: required for differentiation of promyelinating Schwann cells and for normal myelination of axons. G-protein coupled receptor activity can also be activated by type IV collagen, a major constituent of the basement membrane. Also plays a role inner ear development. This is Adhesion G-protein coupled receptor G6 (adgrg6) from Danio rerio (Zebrafish).